The sequence spans 106 residues: Ferredoxin-2 (106 aa).

2 4Fe-4S ferredoxin-type domains span residues 2 to 29 (YVVTENCIKCKYQDCVEVCPVDCFYEGE) and 30 to 59 (NFLVINPDECIDCGVCNPECPAEAIAGKWL). [3Fe-4S] cluster contacts are provided by cysteine 8 and cysteine 16. [4Fe-4S] cluster-binding residues include cysteine 20, cysteine 39, cysteine 42, and cysteine 45. Cysteine 49 provides a ligand contact to [3Fe-4S] cluster. Positions 80–106 (ADADDWKDKPDKTGLLSENPGKGTVCH) are disordered.

The cofactor is [4Fe-4S] cluster. Requires [3Fe-4S] cluster as cofactor.

In terms of biological role, ferredoxins are iron-sulfur proteins that transfer electrons in a wide variety of metabolic reactions. In Rhodospirillum rubrum, this protein is Ferredoxin-2.